Reading from the N-terminus, the 75-residue chain is Putative DNA-directed RNA polymerase subunit omega (75 aa).

This sequence belongs to the RNA polymerase subunit omega family.

The protein resides in the plastid. It is found in the chloroplast. It catalyses the reaction RNA(n) + a ribonucleoside 5'-triphosphate = RNA(n+1) + diphosphate. Functionally, may be involved in RNA polymerase activity. The chain is Putative DNA-directed RNA polymerase subunit omega from Pyropia yezoensis (Susabi-nori).